A 243-amino-acid chain; its full sequence is uncharacterized protein (243 aa).

This is an uncharacterized protein from Methanocaldococcus jannaschii (strain ATCC 43067 / DSM 2661 / JAL-1 / JCM 10045 / NBRC 100440) (Methanococcus jannaschii).